A 366-amino-acid chain; its full sequence is Probable cinnamyl alcohol dehydrogenase 3 (366 aa).

Cys-53 is a binding site for Zn(2+). Position 55 (Ser-55) interacts with NADP(+). Zn(2+)-binding residues include His-75, Glu-76, Cys-106, Cys-109, Cys-112, Cys-120, and Cys-169. Residues Thr-173, 194-199 (GLGGLG), 217-222 (SSSPGK), Thr-257, Gly-281, and 304-306 (SNI) each bind NADP(+).

It belongs to the zinc-containing alcohol dehydrogenase family. Homodimer. The cofactor is Zn(2+).

The enzyme catalyses (E)-cinnamyl alcohol + NADP(+) = (E)-cinnamaldehyde + NADPH + H(+). The catalysed reaction is (E)-coniferol + NADP(+) = (E)-coniferaldehyde + NADPH + H(+). It carries out the reaction (E)-sinapyl alcohol + NADP(+) = (E)-sinapaldehyde + NADPH + H(+). It catalyses the reaction (E)-4-coumaroyl alcohol + NADP(+) = (E)-4-coumaraldehyde + NADPH + H(+). The enzyme catalyses (E)-caffeyl alcohol + NADP(+) = (E)-caffeyl aldehyde + NADPH + H(+). It participates in aromatic compound metabolism; phenylpropanoid biosynthesis. Involved in lignin biosynthesis. Catalyzes the final step specific for the production of lignin monomers. Catalyzes the NADPH-dependent reduction of coniferaldehyde, 5-hydroxyconiferaldehyde, sinapaldehyde, 4-coumaraldehyde and caffeyl aldehyde to their respective alcohols. This chain is Probable cinnamyl alcohol dehydrogenase 3, found in Oryza sativa subsp. japonica (Rice).